The chain runs to 1050 residues: Probable beta-glucosidase E (1050 aa).

The tract at residues 1–87 is disordered; that stretch reads MPPPDSNPGS…RSSSTNGGHN (87 aa). Over 1–174 the chain is Cytoplasmic; it reads MPPPDSNPGS…VKYARIWRRT (174 aa). Residues 11–20 are compositionally biased toward basic and acidic residues; that stretch reads FRDHLKHDNK. A compositionally biased stretch (low complexity) spans 47–56; it reads SPRSASASSS. The segment covering 78-87 has biased composition (polar residues); the sequence is RSSSTNGGHN. The helical; Signal-anchor for type II membrane protein transmembrane segment at 175 to 195 threads the bilayer; the sequence is LVVVIVALALLVWGFLRFTAA. The Extracellular segment spans residues 196–1050; that stretch reads QRQGPKVWPM…SRDLPLQAKY (855 aa). Residues Asn-236, Asn-244, Asn-300, and Asn-430 are each glycosylated (N-linked (GlcNAc...) asparagine). Asp-458 is an active-site residue. Residues Asn-501, Asn-540, Asn-605, Asn-884, Asn-920, Asn-929, and Asn-993 are each glycosylated (N-linked (GlcNAc...) asparagine).

It belongs to the glycosyl hydrolase 3 family.

It localises to the cell membrane. The enzyme catalyses Hydrolysis of terminal, non-reducing beta-D-glucosyl residues with release of beta-D-glucose.. It functions in the pathway glycan metabolism; cellulose degradation. Beta-glucosidases are one of a number of cellulolytic enzymes involved in the degradation of cellulosic biomass. Catalyzes the last step releasing glucose from the inhibitory cellobiose. This Aspergillus clavatus (strain ATCC 1007 / CBS 513.65 / DSM 816 / NCTC 3887 / NRRL 1 / QM 1276 / 107) protein is Probable beta-glucosidase E (bglE).